We begin with the raw amino-acid sequence, 560 residues long: Nuclear receptor subfamily 5 group A member 2 (560 aa).

Positions 17 to 54 (GLPAIAPAPGSETPHSPKLEEKHREKRAGLPDRHRRPI) are disordered. Positions 31 to 48 (HSPKLEEKHREKRAGLPD) are enriched in basic and acidic residues. Positions 104–179 (EELCPVCGDK…VGMKLEAVRA (76 aa)) form a DNA-binding region, nuclear receptor. Zn(2+)-binding residues include Cys107, Cys110, Cys124, Cys127, Cys143, Cys149, Cys159, and Cys162. 2 NR C4-type zinc fingers span residues 107–127 (CPVC…CESC) and 143–162 (CIEN…CPYC). Residues 173–188 (KLEAVRADRMRGGRNK) are C-terminal extension (CTE). The FTZ-F1 box signature appears at 189-208 (FGPMYKRDRALKQQKKALIR). A Glycyl lysine isopeptide (Lys-Gly) (interchain with G-Cter in SUMO1) cross-link involves residue Lys289. The region spanning 319 to 558 (SIPHLILELL…NLLIEMLHAK (240 aa)) is the NR LBD domain. Residues Tyr535 and Lys539 each contribute to the a phospholipid derivative site. Positions 547–558 (YNNLLIEMLHAK) are AF-2.

The protein belongs to the nuclear hormone receptor family. NR5 subfamily. As to quaternary structure, monomer; Binds DNA as a monomer. Interacts with nuclear receptor corepressors NR0B1 and NR0B2; repressing NR5A2 nuclear receptor activity. Interacts with nuclear receptor coactivators CTNNB1, PPARGC1A and NCOA2; interaction takes place following ligand-binding and promotes target gene activation. Interacts (when sumoylated) with GPS2; interaction with GPS2 onto hepatic acute phase protein promoters prevents N-Cor corepressor complex dissociation. Interacts with HNF1A. Interacts with GRIP1. Sumoylated by SUMO1 at Lys-289 during the hepatic acute phase response, leading to promote interaction with GPS2 and prevent N-Cor corepressor complex dissociation.

It is found in the nucleus. Its subcellular location is the chromosome. Its function is as follows. Orphan nuclear receptor that binds DNA as a monomer to the 5'-TCAAGGCCA-3' sequence and controls expression of target genes: regulates key biological processes, such as early embryonic development, cholesterol and bile acid synthesis pathways, as well as liver and pancreas morphogenesis. Ligand-binding causes conformational change which causes recruitment of coactivators, promoting target gene activation. The specific ligand is unknown, but specific phospholipids, such as phosphatidylethanolamine, phosphatidylserine, dilauroyl phosphatidylcholine and diundecanoyl phosphatidylcholine can act as ligand in vitro. Acts as a pioneer transcription factor, which unwraps target DNA from histones and elicits local opening of closed chromatin. Plays a central role during preimplantation stages of embryonic development. Plays a minor role in zygotic genome activation (ZGA) by regulating a small set of two-cell stage genes. Plays a major role in morula development (2-16 cells embryos) by acting as a master regulator at the 8-cell stage, controlling expression of lineage-specifying transcription factors and genes involved in mitosis, telomere maintenance and DNA repair. Zygotic NR5A2 binds to both closed and open chromatin with other transcription factors, often at SINE B1/Alu repeats DNA elements, promoting chromatin accessibility at nearby regulatory regions. Also involved in the epiblast stage of development and embryonic stem cell pluripotency, by promoting expression of POU5F1/OCT4. Regulates other processes later in development, such as formation of connective tissue in lower jaw and middle ear, neural stem cell differentiation, ovarian follicle development and Sertoli cell differentiation. Involved in exocrine pancreas development and acinar cell differentiation. Acts as an essential transcriptional regulator of lipid metabolism. Key regulator of cholesterol 7-alpha-hydroxylase gene (CYP7A) expression in liver. Also acts as a negative regulator of inflammation in different organs, such as, liver and pancreas. Protects against intestinal inflammation via its ability to regulate glucocorticoid production. Plays an anti-inflammatory role during the hepatic acute phase response by acting as a corepressor: inhibits the hepatic acute phase response by preventing dissociation of the N-Cor corepressor complex. Acts as a regulator of immunity by promoting lymphocyte T-cell development, proliferation and effector functions. Also involved in resolution of endoplasmic reticulum stress in the liver. This is Nuclear receptor subfamily 5 group A member 2 from Rattus norvegicus (Rat).